A 306-amino-acid chain; its full sequence is Porphobilinogen deaminase (306 aa).

S-(dipyrrolylmethanemethyl)cysteine is present on C240.

This sequence belongs to the HMBS family. In terms of assembly, monomer. Dipyrromethane serves as cofactor.

It carries out the reaction 4 porphobilinogen + H2O = hydroxymethylbilane + 4 NH4(+). Its pathway is porphyrin-containing compound metabolism; protoporphyrin-IX biosynthesis; coproporphyrinogen-III from 5-aminolevulinate: step 2/4. In terms of biological role, tetrapolymerization of the monopyrrole PBG into the hydroxymethylbilane pre-uroporphyrinogen in several discrete steps. The protein is Porphobilinogen deaminase of Syntrophomonas wolfei subsp. wolfei (strain DSM 2245B / Goettingen).